The chain runs to 529 residues: Cytokinin dehydrogenase 4 (529 aa).

A signal peptide spans 1 to 27 (MRGAMKPSIVHCLKLLMLLALGGVTMH). The FAD-binding PCMH-type domain occupies 63–244 (CSLLPAAVLH…TRARIALEPA (182 aa)). 3 residues coordinate FAD: A99, G101, and G103. At H104 the chain carries Pros-8alpha-FAD histidine. FAD is bound by residues S105, Q109, D168, T173, S179, V183, and I234. N-linked (GlcNAc...) asparagine glycans are attached at residues N285, N419, and N425. The FAD site is built by Y479 and Q517.

The protein belongs to the oxygen-dependent FAD-linked oxidoreductase family. Monomer. It depends on FAD as a cofactor. As to expression, expressed in inflorescence meristems.

The protein resides in the secreted. It is found in the extracellular space. The enzyme catalyses N(6)-dimethylallyladenine + A + H2O = 3-methyl-2-butenal + adenine + AH2. Its function is as follows. Catalyzes the oxidation of cytokinins, a family of N(6)-substituted adenine derivatives that are plant hormones, where the substituent is an isopentenyl group. This is Cytokinin dehydrogenase 4 (CKX4) from Oryza sativa subsp. japonica (Rice).